Consider the following 205-residue polypeptide: Casparian strip membrane protein 4 (205 aa).

At 1–58 the chain is on the cytoplasmic side; the sequence is MDIEKTGSRREEEEPIVQKPKLEKGKGKAHVFAPPMNYSRIMEKHKQEKVSMAGWKRG. A helical membrane pass occupies residues 59–79; it reads VAIFDFVLRLIAAITAMAAAA. Residues 80-109 lie on the Extracellular side of the membrane; the sequence is KMATTEETLPFFTQFLQFSADYTDLPTLSS. Residues 110–130 form a helical membrane-spanning segment; it reads FVIVNSIVGGYLTLSLPFSIV. Residues 131-148 are Cytoplasmic-facing; it reads CILRPLAVPPRLFLILCD. The helical transmembrane segment at 149 to 169 threads the bilayer; sequence TAMMGLTMVAASASAAIVYLA. At 170 to 205 the chain is on the extracellular side; sequence HNGNSSSNWLPVCQQFGDFCKERVAPWWLPLLQRLF. Residue Asn-173 is glycosylated (N-linked (GlcNAc...) asparagine).

The protein belongs to the Casparian strip membrane proteins (CASP) family. In terms of assembly, homodimer and heterodimers.

The protein resides in the cell membrane. Regulates membrane-cell wall junctions and localized cell wall deposition. Required for establishment of the Casparian strip membrane domain (CSD) and the subsequent formation of Casparian strips, a cell wall modification of the root endodermis that determines an apoplastic barrier between the intraorganismal apoplasm and the extraorganismal apoplasm and prevents lateral diffusion. The chain is Casparian strip membrane protein 4 from Raphanus sativus (Radish).